A 357-amino-acid chain; its full sequence is Probable xyloglucan endotransglucosylase/hydrolase protein 29 (357 aa).

Residues 1–31 (MRDSIYLLWIDNRLVVIIMMVMMVSCRCVLG) form the signal peptide. In terms of domain architecture, GH16 spans 32-232 (LENINPIFFD…YTFSPFVSEF (201 aa)). Residue glutamate 117 is the Nucleophile of the active site. The active-site Proton donor is glutamate 121. Residues glutamate 121 and 134 to 136 (QTN) each bind xyloglucan. The N-linked (GlcNAc...) asparagine glycan is linked to asparagine 140. Residues 144–148 (NRGRE), 211–212 (SW), and glycine 216 each bind xyloglucan. Asparagine 241 and asparagine 262 each carry an N-linked (GlcNAc...) asparagine glycan. A disulfide bond links cysteine 299 and cysteine 312. Xyloglucan is bound at residue arginine 304. The segment at 326–357 (GRLKFGGSHPKVHKARKKRRRNRSTPVVSADL) is disordered. The segment covering 335-348 (PKVHKARKKRRRNR) has biased composition (basic residues). Residue asparagine 347 is glycosylated (N-linked (GlcNAc...) asparagine).

The protein belongs to the glycosyl hydrolase 16 family. XTH group 3 subfamily. In terms of processing, contains at least one intrachain disulfide bond essential for its enzymatic activity.

It localises to the secreted. It is found in the cell wall. The protein localises to the extracellular space. The protein resides in the apoplast. The enzyme catalyses breaks a beta-(1-&gt;4) bond in the backbone of a xyloglucan and transfers the xyloglucanyl segment on to O-4 of the non-reducing terminal glucose residue of an acceptor, which can be a xyloglucan or an oligosaccharide of xyloglucan.. In terms of biological role, catalyzes xyloglucan endohydrolysis (XEH) and/or endotransglycosylation (XET). Cleaves and religates xyloglucan polymers, an essential constituent of the primary cell wall, and thereby participates in cell wall construction of growing tissues. This is Probable xyloglucan endotransglucosylase/hydrolase protein 29 (XTH29) from Arabidopsis thaliana (Mouse-ear cress).